The primary structure comprises 364 residues: MKALILVGGFGTRLRPLTLTLPKPLVEFGNRPMILHQVESLAAAGVTDIVLAVNYRPDVMVAALKKYEEQYNVRIEFSVESEPLGTAGPLKLAEKILGKDDSPFFVLNSDIICDYPFKQLAEFHKKHGDEGTIVVTKVDEPSKYGVVVHKPNHPSRIDRFVEKPVEFVGNRINAGIYILNPSVLKRIELRPTSIEQETFPAICSDGQLHSFDLEGFWMDVGQPKDFLTGTCLYLTSLAKRNSKLLAPNSEPYVYGGNVMVDPSAKIGKNCRIGPNVVIGPNVVVGDGVRLQRCVLLENSKVKDHAWIKSTIVGWNSSVGKWARLENVTVLGDDVTIADEVYVNGGSILPHKSIKQNIDVPAIIM.

It belongs to the transferase hexapeptide repeat family.

The protein localises to the cytoplasm. It catalyses the reaction alpha-D-mannose 1-phosphate + GTP + H(+) = GDP-alpha-D-mannose + diphosphate. Its pathway is nucleotide-sugar biosynthesis; GDP-alpha-D-mannose biosynthesis; GDP-alpha-D-mannose from alpha-D-mannose 1-phosphate (GTP route): step 1/1. Functionally, involved in cell wall synthesis where it is required for glycosylation. Involved in cell cycle progression through cell-size checkpoint. This is Mannose-1-phosphate guanyltransferase (mpg1) from Aspergillus fumigatus (strain ATCC MYA-4609 / CBS 101355 / FGSC A1100 / Af293) (Neosartorya fumigata).